Consider the following 452-residue polypeptide: Phosphatidylserine synthase 2 (452 aa).

The Cytoplasmic segment spans residues 1–35 (MAKGEWKRSGADDLPLPGRSECEVFDDGTNTFFWR). A helical transmembrane segment spans residues 36-56 (AHTVTVLFILTCALVYVTLLE). Over 57–69 (ETPHDTAYNTKRG) the chain is Lumenal. A helical transmembrane segment spans residues 70 to 90 (IVASILVFLCFGVTQAKDGPF). Over 91-99 (TRPHPAYWR) the chain is Cytoplasmic. The helical transmembrane segment at 100–120 (FWLCVSVVYELFLIFILFQTV) threads the bilayer. At 121-286 (HDGRQFMKYI…EWRPASNLRR (166 aa)) the chain is on the lumenal side. Residues 287 to 307 (WLAVLGIIFMFLLAELNTFYL) form a helical membrane-spanning segment. Position 308 (Lys308) is a topological domain, cytoplasmic. Residues 309 to 329 (FVMWMPPEHYLVLFRLVFFVN) form a helical membrane-spanning segment. The Lumenal portion of the chain corresponds to 330 to 349 (VGGVAMREIYDFMDDPKFHK). The chain crosses the membrane as a helical span at residues 350 to 370 (KLGQQAWIVAAITVTEFLIVV). Over 371–376 (KYDPNT) the chain is Cytoplasmic. The chain crosses the membrane as a helical span at residues 377–397 (IMLPIPFFITQCWILGIALIL). Topologically, residues 398-452 (VWTLWRFFIRDITLRYKETRRRRQEVSSERDGSSSAPSGRSKLNGSMDSVRHRKS) are lumenal. Residues 419-452 (RRQEVSSERDGSSSAPSGRSKLNGSMDSVRHRKS) form a disordered region. Positions 430–444 (SSSAPSGRSKLNGSM) are enriched in polar residues.

It belongs to the phosphatidyl serine synthase family.

The protein localises to the endoplasmic reticulum membrane. It carries out the reaction a 1,2-diacyl-sn-glycero-3-phosphoethanolamine + L-serine = a 1,2-diacyl-sn-glycero-3-phospho-L-serine + ethanolamine. The catalysed reaction is 1-hexadecanoyl-2-(9Z-octadecenoyl)-sn-glycero-3-phosphoethanolamine + L-serine = 1-hexadecanoyl-2-(9Z-octadecenoyl)-sn-glycero-3-phospho-L-serine + ethanolamine. The enzyme catalyses 1-hexadecanoyl-2-(4Z,7Z,10Z,13Z,16Z,19Z-docosahexaenoyl)-sn-glycero-3-phosphoethanolamine + L-serine = 1-hexadecanoyl-2-(4Z,7Z,10Z,13Z,16Z,19Z-docosahexaenoyl)-sn-glycero-3-phosphoserine + ethanolamine. It catalyses the reaction 1-octadecanoyl-2-(5Z,8Z,11Z,14Z)-eicosatetraenoyl-sn-glycero-3-phosphoethanolamine + L-serine = 1-octadecanoyl-2-(5Z,8Z,11Z,14Z)-eicosatetraenoyl-sn-glycero-3-phosphoserine + ethanolamine. It carries out the reaction 1-octadecanoyl-2-(4Z,7Z,10Z,13Z,16Z,19Z-docosahexaenoyl)-sn-glycero-3-phosphoethanolamine + L-serine = 1-octadecanoyl-2-(4Z,7Z,10Z,13Z,16Z,19Z-docosahexaenoyl)-sn-glycero-3-phosphoserine + ethanolamine. The catalysed reaction is 1-(1Z-octadecenyl)-2-(4Z,7Z,10Z,13Z,16Z,19Z-docosahexaenoyl)-sn-glycero-3-phosphoethanolamine + L-serine = 1-(1Z-octadecenyl)-2-(4Z,7Z,10Z,13Z,16Z,19Z-docosahexaenoyl)-sn-glycero-3-phospho-L-serine + ethanolamine. The enzyme catalyses 1-octadecanoyl-2-(9Z-octadecenoyl)-sn-glycero-3-phosphoethanolamine + L-serine = 1-octadecanoyl-2-(9Z-octadecenoyl)-sn-glycero-3-phospho-L-serine + ethanolamine. It catalyses the reaction 1-(1Z-octadecenyl)-2-(9Z-octadecenoyl)-sn-glycero-3-phosphoethanolamine + L-serine = 1-(1Z-octadecenyl)-2-(9Z-octadecenoyl)-sn-glycero-3-phospho-L-serine + ethanolamine. It carries out the reaction 1-(1Z-octadecenyl)-2-(5Z,8Z,11Z,14Z- eicosatetraenoyl)-sn-glycero-3-phosphoethanolamine + L-serine = 1-(1Z-octadecenyl)-2-(5Z,8Z,11Z,14Z-eicosatetraenoyl)-sn-glycero-3-phospho-L-serine + ethanolamine. It participates in phospholipid metabolism; phosphatidylserine biosynthesis. Functionally, catalyzes a base-exchange reaction in which the polar head group of phosphatidylethanolamine (PE) or phosphatidylcholine (PC) is replaced by L-serine. Catalyzes the conversion of phosphatatidylethanolamine and does not act on phosphatidylcholine. Can utilize both phosphatidylethanolamine (PE) plasmalogen and diacyl PE as substrate and the latter is six times better utilized, indicating the importance of an ester linkage at the sn-1 position. Although it shows no sn-1 fatty acyl preference, exhibits significant preference towards docosahexaenoic acid (22:6n-3) compared with 18:1 or 20:4 at the sn-2 position. This is Phosphatidylserine synthase 2 (ptdss2) from Danio rerio (Zebrafish).